A 177-amino-acid polypeptide reads, in one-letter code: MLDAFSRVVTGADSKAAYVGGADLQALKKFVSEGNKRLDAVNAIVSNASCIVSDAVSGMICENPSLISPSGECYTNRRMAACLRDAEIILRYVSYSLLSGDSSVLEDRCLSGLKETYASLGVPAAGNARAVGIMKATVVAFINNTSNQKKLLTPSGDCSALASEAAGYFDKVTSALA.

Tyrosine 18 contributes to the mesobiliverdin binding site. Residues lysine 28, asparagine 35, and aspartate 39 each contribute to the (2R,3E)-phycocyanobilin site. Positions 50, 54, and 61 each coordinate 15,16-dihydrobiliverdin. The (2R,3E)-phycocyanobilin site is built by arginine 77, cysteine 82, arginine 84, and aspartate 85. A 15,16-dihydrobiliverdin-binding site is contributed by glutamine 148. Positions 154, 156, and 158 each coordinate (2R,3E)-phycocyanobilin.

Belongs to the phycobiliprotein family. As to quaternary structure, heterotetramer of 2 different alpha chains and 2 identical beta chains which form 2 alpha-beta heterodimers within the heterotetramer. Post-translationally, contains two phycocyanobilin chromophores, one mesobiliverdin chromophore and one 15,16-dihydrobiliverdin chromophore with binding mediated by both the alpha and beta subunits.

The protein localises to the plastid. It localises to the chloroplast thylakoid membrane. Its function is as follows. Light-harvesting photosynthetic tetrapyrrole chromophore-protein from the phycobiliprotein complex. The sequence is that of Phycocyanin-645 beta chain from Chroomonas sp.